Here is a 270-residue protein sequence, read N- to C-terminus: Phospholysine phosphohistidine inorganic pyrophosphate phosphatase (270 aa).

Residues Asp17 and Ser19 each coordinate Mg(2+). Substrate is bound by residues 17–19 (DIS), 54–55 (TN), and Lys189. Asp214 is a Mg(2+) binding site.

Belongs to the HAD-like hydrolase superfamily. Homodimer. Requires Mg(2+) as cofactor. Detected in liver (at protein level).

The protein localises to the cytoplasm. It localises to the nucleus. It carries out the reaction diphosphate + H2O = 2 phosphate + H(+). Phosphatase that hydrolyzes imidodiphosphate, 3-phosphohistidine and 6-phospholysine. Has broad substrate specificity and can also hydrolyze inorganic diphosphate, but with lower efficiency. The polypeptide is Phospholysine phosphohistidine inorganic pyrophosphate phosphatase (LHPP) (Bos taurus (Bovine)).